The sequence spans 468 residues: ATP synthase subunit beta 1 (468 aa).

151–158 (GGAGVGKT) serves as a coordination point for ATP.

The protein belongs to the ATPase alpha/beta chains family. F-type ATPases have 2 components, CF(1) - the catalytic core - and CF(0) - the membrane proton channel. CF(1) has five subunits: alpha(3), beta(3), gamma(1), delta(1), epsilon(1). CF(0) has three main subunits: a(1), b(2) and c(9-12). The alpha and beta chains form an alternating ring which encloses part of the gamma chain. CF(1) is attached to CF(0) by a central stalk formed by the gamma and epsilon chains, while a peripheral stalk is formed by the delta and b chains.

It localises to the cell inner membrane. It catalyses the reaction ATP + H2O + 4 H(+)(in) = ADP + phosphate + 5 H(+)(out). Produces ATP from ADP in the presence of a proton gradient across the membrane. The catalytic sites are hosted primarily by the beta subunits. This is ATP synthase subunit beta 1 from Photobacterium profundum (strain SS9).